The following is a 474-amino-acid chain: tRNA-2-methylthio-N(6)-dimethylallyladenosine synthase (474 aa).

One can recognise an MTTase N-terminal domain in the interval 3–120; it reads KKLHIKTWGC…LPEMLNHVQG (118 aa). Positions 12, 49, 83, 157, 161, and 164 each coordinate [4Fe-4S] cluster. Residues 143 to 375 enclose the Radical SAM core domain; it reads RAEGPTAFVS…QDRINQQVLQ (233 aa). Residues 378 to 441 form the TRAM domain; that stretch reads RRMLGTVQRI…TNSLRGTVVR (64 aa).

This sequence belongs to the methylthiotransferase family. MiaB subfamily. Monomer. The cofactor is [4Fe-4S] cluster.

Its subcellular location is the cytoplasm. The catalysed reaction is N(6)-dimethylallyladenosine(37) in tRNA + (sulfur carrier)-SH + AH2 + 2 S-adenosyl-L-methionine = 2-methylsulfanyl-N(6)-dimethylallyladenosine(37) in tRNA + (sulfur carrier)-H + 5'-deoxyadenosine + L-methionine + A + S-adenosyl-L-homocysteine + 2 H(+). In terms of biological role, catalyzes the methylthiolation of N6-(dimethylallyl)adenosine (i(6)A), leading to the formation of 2-methylthio-N6-(dimethylallyl)adenosine (ms(2)i(6)A) at position 37 in tRNAs that read codons beginning with uridine. This Serratia proteamaculans (strain 568) protein is tRNA-2-methylthio-N(6)-dimethylallyladenosine synthase.